The sequence spans 326 residues: uncharacterized protein (326 aa).

It belongs to the transferase hexapeptide repeat family.

This is an uncharacterized protein from Escherichia coli (strain K12).